A 346-amino-acid polypeptide reads, in one-letter code: Ly6/PLAUR domain-containing protein 3 (346 aa).

An N-terminal signal peptide occupies residues 1–30 (MDPARKAGAQAMIWTAGWLLLLLLRGGAQA). UPAR/Ly6 domains are found at residues 33 to 126 (CYSC…ALDP) and 140 to 222 (CYSC…SRCN). 4 N-linked (GlcNAc...) asparagine glycosylation sites follow: Asn-118, Asn-163, Asn-176, and Asn-183. The segment at 233 to 324 (PRIPPLVRLP…KGGPQQPHNK (92 aa)) is disordered. Residues 234–246 (RIPPLVRLPPPEP) show a composition bias toward pro residues. Residues 247-269 (TTVASTTSVTTSTSAPVRPTSTT) show a composition bias toward low complexity. The span at 283–295 (GVEHEASRDEEPR) shows a compositional bias: basic and acidic residues. A lipid anchor (GPI-anchor amidated cysteine) is attached at Cys-326. Residues 327–346 (VAPTAGLAALLLAVAAGVLL) constitute a propeptide, removed in mature form.

In terms of assembly, binds laminin-1 and laminin-5. Interacts with LGALS3. Interacts with AGR2 and AGR3. Post-translationally, N-glycosylated and O-glycosylated. Expressed in placenta, skin and urothelium. Found in suprabasal keratinocytes of chronic wounds. Weak expression is found in esophagus and peripheral blood mononuclear cells. Found in the majority of primary and metastatic transitional cell carcinomas (TCCs) and as well in breast cancer tissues, but not in adjacent normal tissues. High expression is found in the tumor component of some noninvasive superficial lesions and in invasive and metastatic urothelial cancers.

Its subcellular location is the cell membrane. Its function is as follows. Supports cell migration. May be involved in urothelial cell-matrix interactions. May be involved in tumor progression. The sequence is that of Ly6/PLAUR domain-containing protein 3 (LYPD3) from Homo sapiens (Human).